A 169-amino-acid chain; its full sequence is Large ribosomal subunit protein uL10 (169 aa).

Belongs to the universal ribosomal protein uL10 family. Part of the ribosomal stalk of the 50S ribosomal subunit. The N-terminus interacts with L11 and the large rRNA to form the base of the stalk. The C-terminus forms an elongated spine to which L12 dimers bind in a sequential fashion forming a multimeric L10(L12)X complex.

Functionally, forms part of the ribosomal stalk, playing a central role in the interaction of the ribosome with GTP-bound translation factors. The chain is Large ribosomal subunit protein uL10 from Rickettsia rickettsii (strain Iowa).